A 282-amino-acid polypeptide reads, in one-letter code: B3 domain-containing protein At5g25475 (282 aa).

Residues 20-114 constitute a DNA-binding region (TF-B3); that stretch reads WKSLSPGQTW…NLEVQIFKNN (95 aa). The segment at 127–178 is disordered; it reads PETEPFHPTPKKPHKETTPASSFASGSGCSANGGTNGRGKQRSSDVKNPERY. Positions 144-159 are enriched in low complexity; the sequence is TPASSFASGSGCSANG.

The protein localises to the nucleus. This Arabidopsis thaliana (Mouse-ear cress) protein is B3 domain-containing protein At5g25475.